We begin with the raw amino-acid sequence, 143 residues long: Large-conductance mechanosensitive channel (143 aa).

Helical transmembrane passes span 10 to 30 (FAVK…GAFS) and 89 to 109 (GSFI…FLMV).

The protein belongs to the MscL family. As to quaternary structure, homopentamer.

It localises to the cell inner membrane. Its function is as follows. Channel that opens in response to stretch forces in the membrane lipid bilayer. May participate in the regulation of osmotic pressure changes within the cell. The protein is Large-conductance mechanosensitive channel of Burkholderia vietnamiensis (strain G4 / LMG 22486) (Burkholderia cepacia (strain R1808)).